We begin with the raw amino-acid sequence, 335 residues long: Methionine import ATP-binding protein MetN (335 aa).

Positions 2–241 (IEFQRLHKSY…PKHVTTRRFV (240 aa)) constitute an ABC transporter domain. An ATP-binding site is contributed by 38-45 (GHSGAGKS).

Belongs to the ABC transporter superfamily. Methionine importer (TC 3.A.1.24) family. In terms of assembly, the complex is composed of two ATP-binding proteins (MetN), two transmembrane proteins (MetI) and a solute-binding protein (MetQ).

It is found in the cell inner membrane. The enzyme catalyses L-methionine(out) + ATP + H2O = L-methionine(in) + ADP + phosphate + H(+). It catalyses the reaction D-methionine(out) + ATP + H2O = D-methionine(in) + ADP + phosphate + H(+). Part of the ABC transporter complex MetNIQ involved in methionine import. Responsible for energy coupling to the transport system. This Xanthomonas oryzae pv. oryzae (strain KACC10331 / KXO85) protein is Methionine import ATP-binding protein MetN.